The chain runs to 234 residues: Phosphoglycolate phosphatase (234 aa).

Asp-9 functions as the Nucleophile in the catalytic mechanism. The Mg(2+) site is built by Asp-9 and Asp-11. Lys-162 contributes to the substrate binding site. Mg(2+)-binding residues include Asp-185 and Asp-189.

This sequence belongs to the archaeal SPP-like hydrolase family. Mg(2+) is required as a cofactor.

It catalyses the reaction 2-phosphoglycolate + H2O = glycolate + phosphate. Its function is as follows. Catalyzes the dephosphorylation of 2-phosphoglycolate. In Methanobrevibacter smithii (strain ATCC 35061 / DSM 861 / OCM 144 / PS), this protein is Phosphoglycolate phosphatase.